The chain runs to 122 residues: Large ribosomal subunit protein uL14 (122 aa).

The protein belongs to the universal ribosomal protein uL14 family. Part of the 50S ribosomal subunit. Forms a cluster with proteins L3 and L19. In the 70S ribosome, L14 and L19 interact and together make contacts with the 16S rRNA in bridges B5 and B8.

Its function is as follows. Binds to 23S rRNA. Forms part of two intersubunit bridges in the 70S ribosome. The chain is Large ribosomal subunit protein uL14 from Thermosynechococcus vestitus (strain NIES-2133 / IAM M-273 / BP-1).